Here is a 516-residue protein sequence, read N- to C-terminus: MPSIHASTSELFTHLTVSNICVAAGCAFALSLLYLYVRALYLVFFHPLSRIPGPKYAACSRLPYVRNQLRGDLVKWLHSLHQQYGDVVRIAPDEVSFISNVWQDVYAAHNGEKATKGTYLKDRRWFAAPYNNTWSILQADAEAHPRMRKMIAPAFSDKVLREQEAMIQEYVELFVLRLHEQTENDSKGDVDMVKWFNFFTFDIIADMTFGESFNCLRDSDYHPWVRMLFKSVRAISLNSAIRRYPFFQAIVKRLAPKNLLEQRRQFNQFVFDRVGERLASESSHPDLMSHIKKFKDEPKGMNRDEIDSNANILLVAGSETTATLLSGCTYMLLSNPEKLAKLTKEVRGTFNHPSEVTIKAVSNMPYLHAALSEALRIYPPSPAGFMRIVPGNGDMIGGHWIPGGTSVSVSQWPANHSDSNFTMPNSFVPERFLGDPRFEKDNTSVLNPFSAGPRNCLGKSLANVEMRLIMARLLLDFDLELIDPEQDWLDQKSFTLWEKLPLMVRLKPVRRYTAPA.

A helical transmembrane segment spans residues 20 to 42 (ICVAAGCAFALSLLYLYVRALYL). N-linked (GlcNAc...) asparagine glycans are attached at residues asparagine 131, asparagine 184, asparagine 415, asparagine 420, and asparagine 442. Cysteine 456 contributes to the heme binding site.

It belongs to the cytochrome P450 family. The cofactor is heme.

It is found in the membrane. It participates in secondary metabolite biosynthesis. In terms of biological role, cytochrome P450 monooxygenase; part of the gene cluster that mediates the biosynthesis of the lipopeptide antibiotics leucinostatins that show extensive biological activities, including antimalarial, antiviral, antibacterial, antifungal, and antitumor activities, as well as phytotoxic. Leucinostatin A contains nine amino acid residues, including the unusual amino acid 4-methyl-L-proline (MePro), 2-amino-6-hydroxy-4-methyl-8-oxodecanoic acid (AHyMeOA), 3-hydroxyleucine (HyLeu), alpha-aminoisobutyric acid (AIB), beta-Ala, a 4-methylhex-2-enoic acid at the N-terminus as well as a N1,N1-dimethylpropane-1,2-diamine (DPD) at the C-terminus. The biosynthesis of leucinostatins is probably initiated with the assembly of 4-methylhex-2-enoic acid by a reducing PKS. Two reducing polyketide synthases, lcsB and lcsC, have been identified in the cluster and it is not clear which is the one that assembles 4-methylhex-2-enoic acid since both contain KS, AT, DH, cMT, ER, KR and ACP domains. The polyketide residue might be transferred to the NRPS lcsA, mediated by two additional enzymes, the acyl-CoA ligase lcsD and the thioesterase lcsE. The linear polyketide carboxylic acid, which is released from PKS, is converted to a CoA thioester by lcsD, and then lcsE hydrolyzes the thiol bond and shuttles the polyketide intermediate to lcsA. The C domain of the first module catalyzed the condensation of 4-methylhex-2-enoic acid and MePro carried by domain A1, followed by successive condensations of nine amino acids to trigger the elongation of the linear peptide. A5 and A6 domains of lcsA are proposed to incorporate leucine, A2 AHyMeOA, and A3 incorporates HyLeu. A4, A7 and A8 incorporate AIB. The AHyMeOA in leucinostatin A activated by the A2 might be produced by the second PKS (lcsB or lcsC) present within the cluster. The MePro is probably produced via leucine cyclization and may originate from a separate pathway, independent of the cluster. Another nonproteinogenic amino acid, beta-Ala, could be produced by an aspartic acid decarboxylase also localized outside of the cluster. Two candidates are VFPBJ_01400 and VFPBJ_10476. The final peptide scaffold may be released by the NAD(P)H-dependent thioester reductase (TE) at the C-terminal region of lcsA. Transamination of the lcsA product by the transaminase lcsP may produce DPD at the C-terminus. Further hydroxylation steps performed alternatively by the cytochrome P450 monooxygenases lcsI, lcsK and lcsN then yield the non-methylated leucinostatins precursor. It is also possible that leucines can be hydroxylated prior to their incorporation into the peptide. Varying extents of methylation then lead to the formation of leucinostatins A and B. The chain is Cytochrome P450 monooxygenase lcsI from Purpureocillium lilacinum (Paecilomyces lilacinus).